The sequence spans 332 residues: N-acetyl-gamma-glutamyl-phosphate reductase (332 aa).

Cysteine 144 is a catalytic residue.

This sequence belongs to the NAGSA dehydrogenase family. Type 1 subfamily.

It localises to the cytoplasm. The catalysed reaction is N-acetyl-L-glutamate 5-semialdehyde + phosphate + NADP(+) = N-acetyl-L-glutamyl 5-phosphate + NADPH + H(+). Its pathway is amino-acid biosynthesis; L-arginine biosynthesis; N(2)-acetyl-L-ornithine from L-glutamate: step 3/4. In terms of biological role, catalyzes the NADPH-dependent reduction of N-acetyl-5-glutamyl phosphate to yield N-acetyl-L-glutamate 5-semialdehyde. The polypeptide is N-acetyl-gamma-glutamyl-phosphate reductase (Archaeoglobus fulgidus (strain ATCC 49558 / DSM 4304 / JCM 9628 / NBRC 100126 / VC-16)).